The sequence spans 148 residues: D-aminoacyl-tRNA deacylase (148 aa).

The short motif at 137–138 (GP) is the Gly-cisPro motif, important for rejection of L-amino acids element.

It belongs to the DTD family. In terms of assembly, homodimer.

The protein resides in the cytoplasm. The enzyme catalyses glycyl-tRNA(Ala) + H2O = tRNA(Ala) + glycine + H(+). It catalyses the reaction a D-aminoacyl-tRNA + H2O = a tRNA + a D-alpha-amino acid + H(+). Functionally, an aminoacyl-tRNA editing enzyme that deacylates mischarged D-aminoacyl-tRNAs. Also deacylates mischarged glycyl-tRNA(Ala), protecting cells against glycine mischarging by AlaRS. Acts via tRNA-based rather than protein-based catalysis; rejects L-amino acids rather than detecting D-amino acids in the active site. By recycling D-aminoacyl-tRNA to D-amino acids and free tRNA molecules, this enzyme counteracts the toxicity associated with the formation of D-aminoacyl-tRNA entities in vivo and helps enforce protein L-homochirality. The protein is D-aminoacyl-tRNA deacylase of Finegoldia magna (strain ATCC 29328 / DSM 20472 / WAL 2508) (Peptostreptococcus magnus).